The following is a 273-amino-acid chain: Shikimate dehydrogenase (NADP(+)) (273 aa).

Shikimate is bound by residues 14-16 (SKS) and threonine 61. Lysine 65 acts as the Proton acceptor in catalysis. The shikimate site is built by asparagine 86 and aspartate 102. Residues 126–130 (GAGGA), 150–155 (NRTVAK), and methionine 213 each bind NADP(+). Tyrosine 215 contributes to the shikimate binding site. Position 237 (glycine 237) interacts with NADP(+).

Belongs to the shikimate dehydrogenase family. In terms of assembly, homodimer.

The enzyme catalyses shikimate + NADP(+) = 3-dehydroshikimate + NADPH + H(+). Its pathway is metabolic intermediate biosynthesis; chorismate biosynthesis; chorismate from D-erythrose 4-phosphate and phosphoenolpyruvate: step 4/7. In terms of biological role, involved in the biosynthesis of the chorismate, which leads to the biosynthesis of aromatic amino acids. Catalyzes the reversible NADPH linked reduction of 3-dehydroshikimate (DHSA) to yield shikimate (SA). The chain is Shikimate dehydrogenase (NADP(+)) from Tolumonas auensis (strain DSM 9187 / NBRC 110442 / TA 4).